The primary structure comprises 232 residues: tRNA (guanine-N(1)-)-methyltransferase (232 aa).

S-adenosyl-L-methionine is bound at residue Gly116.

The protein belongs to the RNA methyltransferase TrmD family. In terms of assembly, homodimer.

It localises to the cytoplasm. The catalysed reaction is guanosine(37) in tRNA + S-adenosyl-L-methionine = N(1)-methylguanosine(37) in tRNA + S-adenosyl-L-homocysteine + H(+). Its function is as follows. Specifically methylates guanosine-37 in various tRNAs. This is tRNA (guanine-N(1)-)-methyltransferase from Chlorobium luteolum (strain DSM 273 / BCRC 81028 / 2530) (Pelodictyon luteolum).